A 311-amino-acid polypeptide reads, in one-letter code: Homoserine kinase (311 aa).

Residue 88–98 (PEGLGLGSSGA) coordinates ATP.

Belongs to the GHMP kinase family. Homoserine kinase subfamily.

Its subcellular location is the cytoplasm. The catalysed reaction is L-homoserine + ATP = O-phospho-L-homoserine + ADP + H(+). The protein operates within amino-acid biosynthesis; L-threonine biosynthesis; L-threonine from L-aspartate: step 4/5. Catalyzes the ATP-dependent phosphorylation of L-homoserine to L-homoserine phosphate. The chain is Homoserine kinase from Saccharolobus islandicus (strain L.S.2.15 / Lassen #1) (Sulfolobus islandicus).